The following is a 501-amino-acid chain: ATP synthase subunit alpha (501 aa).

Residue 169–176 coordinates ATP; the sequence is GDRQTGKT.

The protein belongs to the ATPase alpha/beta chains family. F-type ATPases have 2 components, CF(1) - the catalytic core - and CF(0) - the membrane proton channel. CF(1) has five subunits: alpha(3), beta(3), gamma(1), delta(1), epsilon(1). CF(0) has three main subunits: a(1), b(2) and c(9-12). The alpha and beta chains form an alternating ring which encloses part of the gamma chain. CF(1) is attached to CF(0) by a central stalk formed by the gamma and epsilon chains, while a peripheral stalk is formed by the delta and b chains.

The protein localises to the cell membrane. It carries out the reaction ATP + H2O + 4 H(+)(in) = ADP + phosphate + 5 H(+)(out). Its function is as follows. Produces ATP from ADP in the presence of a proton gradient across the membrane. The alpha chain is a regulatory subunit. The sequence is that of ATP synthase subunit alpha from Streptococcus pneumoniae serotype 19F (strain G54).